The primary structure comprises 667 residues: E3 ubiquitin-protein ligase Midline-1 (667 aa).

An RING-type zinc finger spans residues 10-60; that stretch reads CPICLELFEDPLLLPCAHSLCFNCAHRILVSHCATNESVESITAFQCPTCR. 2 positions are modified to phosphoserine: S92 and S96. 2 consecutive B box-type zinc fingers follow at residues 116-165 and 172-212; these read KVLC…IEPI and GLMC…VAAL. 12 residues coordinate Zn(2+): C119, C122, C134, C137, C142, C145, H150, H159, C175, H178, C198, and H204. Residues 205 to 264 adopt a coiled-coil conformation; it reads RDHQVAALSERYDKLKQNLESNLTNLIKRNTELETLLAKLIQTCQHVEVNASRQEAKLTE. Residues 320 to 379 enclose the COS domain; that stretch reads LKENDHARFLQTAKNITERVSMATASSQVLIPEINLNDTFDTFALDFSREKKLLECLDYL. The region spanning 381–484 is the Fibronectin type-III domain; that stretch reads APNPPTIREE…EPGKLKTNSQ (104 aa). A compositionally biased stretch (polar residues) spans 471 to 485; that stretch reads SRSSEPGKLKTNSQP. Residues 471-524 form a disordered region; sequence SRSSEPGKLKTNSQPFKLDPKSAHRKLKVSHDNLTVERDESSSKKSHTPERFTS. Residues 482–659 enclose the B30.2/SPRY domain; that stretch reads NSQPFKLDPK…IITGLPIPDH (178 aa). Residues 499 to 520 show a composition bias toward basic and acidic residues; the sequence is VSHDNLTVERDESSSKKSHTPE. A Phosphoserine modification is found at S511.

The protein belongs to the TRIM/RBCC family. In terms of assembly, homodimer or heterodimer with MID2. Interacts with IGBP1. Interacts with TRIM16. Phosphorylated on serine and threonine residues. As to expression, in the fetus, highest expression found in kidney, followed by brain and lung. Expressed at low levels in fetal liver. In the adult, most abundant in heart, placenta and brain.

It is found in the cytoplasm. It localises to the cytoskeleton. The protein resides in the spindle. The enzyme catalyses S-ubiquitinyl-[E2 ubiquitin-conjugating enzyme]-L-cysteine + [acceptor protein]-L-lysine = [E2 ubiquitin-conjugating enzyme]-L-cysteine + N(6)-ubiquitinyl-[acceptor protein]-L-lysine.. In terms of biological role, has E3 ubiquitin ligase activity towards IGBP1, promoting its monoubiquitination, which results in deprotection of the catalytic subunit of protein phosphatase PP2A, and its subsequent degradation by polyubiquitination. This is E3 ubiquitin-protein ligase Midline-1 (MID1) from Homo sapiens (Human).